The primary structure comprises 227 residues: Small ribosomal subunit protein uS3 (227 aa).

In terms of domain architecture, KH type-2 spans 38–106; that stretch reads LRKYLREKLA…EVHLNIVEIR (69 aa).

It belongs to the universal ribosomal protein uS3 family. In terms of assembly, part of the 30S ribosomal subunit. Forms a tight complex with proteins S10 and S14.

Its function is as follows. Binds the lower part of the 30S subunit head. Binds mRNA in the 70S ribosome, positioning it for translation. The chain is Small ribosomal subunit protein uS3 from Paramagnetospirillum magneticum (strain ATCC 700264 / AMB-1) (Magnetospirillum magneticum).